Reading from the N-terminus, the 1049-residue chain is Tegument protein pp150 (1049 aa).

Disordered stretches follow at residues 397–549 (EERQ…DPRF) and 659–945 (PFRM…YPAV). Positions 428 to 439 (ADEDDDDDDDDE) are enriched in acidic residues. A compositionally biased stretch (gly residues) spans 452-462 (SGKGAASGGGV). Over residues 463 to 474 (SSIFSGLLSSGS) the composition is skewed to low complexity. Positions 475-490 (QKPTSGPLNIPQQQQR) are enriched in polar residues. Basic and acidic residues predominate over residues 509-525 (VRRDSAWDVRPLTETRG). Positions 672-688 (TVSTTPRRPSTPRAAVT) are enriched in low complexity. Positions 710 to 722 (PVEDSEEEDDDSS) are enriched in acidic residues. Residues 731 to 743 (GHTTPSSDYNNDV) show a composition bias toward polar residues. The segment covering 745 to 757 (SPPSQTPEQSTPS) has biased composition (low complexity). Composition is skewed to polar residues over residues 766-776 (SPMTTTSTSQK), 791-800 (RAQTVTSTPV), and 808-835 (VSGT…SRNV). 4 stretches are compositionally biased toward low complexity: residues 836 to 855 (TSGA…ASAS), 866 to 884 (SPAT…SPAK), 912 to 928 (VVGR…APGR), and 936 to 945 (ASTTPTYPAV). O-linked (GlcNAc) serine; by host glycosylation occurs at serine 922. The O-linked (GlcNAc) serine; by host glycan is linked to serine 953. The segment at 1006 to 1032 (DLSSPQKSGTGPQPGSAGMGGAKTPSD) is disordered. Residues 1008-1018 (SSPQKSGTGPQ) show a composition bias toward polar residues.

This sequence belongs to the herpesviridae large structural phosphoprotein family. Interacts with host BICD1 and RAB6A. Interacts with small capsid protein UL48A; this interaction links together the capsid and pp150. Interacts with host CCNA2. Post-translationally, phosphorylated by host CCNA2.

The protein resides in the virion tegument. The protein localises to the host cytoplasm. It localises to the host nucleus. Participates in the last steps of viral maturation and release. Associates with nuclear capsids prior to DNA encapsidation and later preserves the integrity of nucleocapsids through secondary envelopment at the assembly compartment. Interacts with host CCNA2 and thereby blocks the onset of lytic gene expression to promote establishment of a quiescent state of infection in undifferentiated cells. The protein is Tegument protein pp150 (UL32) of Homo sapiens (Human).